Here is an 825-residue protein sequence, read N- to C-terminus: Protein SEY1 homolog 2 (825 aa).

A disordered region spans residues 1-21 (MDEVSPTKHFTSKPLLPTKTP). Residues 1–728 (MDEVSPTKHF…EKENSEIKYQ (728 aa)) lie on the Cytoplasmic side of the membrane. Residues 83 to 305 (GMDYNAVGIL…FLPQYNKEIP (223 aa)) form the GB1/RHD3-type G domain. Residue 93 to 100 (GAQSSGKS) participates in GTP binding. Residues 373–397 (KVFTKQIDAALERYKEVTERYMETI) adopt a coiled-coil conformation. A helical transmembrane segment spans residues 729–749 (IPLYLIVLVVFFGFDEFIAIL). Over 750–752 (TNP) the chain is Lumenal. A helical membrane pass occupies residues 753–773 (LLFILTLIIGGGVYIGYKLNL). The Cytoplasmic portion of the chain corresponds to 774-825 (GGVAKNYIQYLLSMSLSSTMEYLRTIPFFTPLIDKVWPKDDNNTEETQEEIK).

Belongs to the TRAFAC class dynamin-like GTPase superfamily. GB1/RHD3 GTPase family. RHD3 subfamily.

The protein localises to the endoplasmic reticulum membrane. In terms of biological role, probable GTP-binding protein that may be involved in cell development. The polypeptide is Protein SEY1 homolog 2 (Entamoeba histolytica (strain ATCC 30459 / HM-1:IMSS / ABRM)).